The following is a 119-amino-acid chain: Autophagy-related protein 8h (119 aa).

The Phosphatidylethanolamine amidated glycine moiety is linked to residue glycine 119.

It belongs to the ATG8 family. Interacts with ATG4. Interacts with ATI1. Post-translationally, gly-119 forms then a thioester bond with the 'Cys-558' of ATG7 (E1-like activating enzyme) before being transferred to the 'Cys-258' of ATG3 (the specific E2 conjugating enzyme), in order to be finally amidated with phosphatidylethanolamine. This lipid modification anchors ATG8 to autophagosomes. Constitutively expressed.

Its subcellular location is the cytoplasmic vesicle. The protein resides in the autophagosome membrane. It is found in the vacuole membrane. The protein localises to the cytoplasm. It localises to the cytoskeleton. Its function is as follows. Ubiquitin-like modifier involved in autophagosomes formation. May mediate the delivery of the autophagosomes to the vacuole via the microtubule cytoskeleton. This is Autophagy-related protein 8h (ATG8H) from Arabidopsis thaliana (Mouse-ear cress).